Consider the following 373-residue polypeptide: Glutamine synthetase (373 aa).

Ala2 is modified (N-acetylalanine). Residues 2–25 (ATSASSHLNKGIKQMYMNLPQGEK) are required for glutamine-induced ubiquitination by CRL4(CRBN) and proteasomal degradation. 2 positions are modified to N6-acetyllysine: Lys11 and Lys14. Residues 24–106 (EKIQLMYIWV…VFCEVFKYNR (83 aa)) enclose the GS beta-grasp domain. The residue at position 104 (Tyr104) is a Phosphotyrosine. One can recognise a GS catalytic domain in the interval 113–373 (LRHSCKRIMD…TGDEPFQYKN (261 aa)). An ATP-binding site is contributed by Glu134. Mn(2+) is bound by residues Glu134, Glu136, Glu196, and Glu203. 203–208 (EFQIGP) contacts ATP. 246-247 (NW) provides a ligand contact to L-glutamate. His253 contacts Mn(2+). Residues 255–257 (NFS), Arg319, and Arg324 contribute to the ATP site. Residue Arg319 coordinates L-glutamate. 336–338 (YFE) contributes to the ADP binding site. Glu338 serves as a coordination point for Mn(2+). Residue Arg340 coordinates L-glutamate. Ser343 carries the phosphoserine modification.

It belongs to the glutamine synthetase family. As to quaternary structure, decamer; composed of two pentamers. Interacts with PALMD. Interacts with RHOJ. Interacts with BEST2; this interaction tethers a fraction of GLUL to the membrane, causing a decrease of cytosolic glutamine synthase (GS) activity and inhibits the chloride channel activity of BEST2 by affecting the gating at the aperture in the absence of intracellular glutamate. Mg(2+) is required as a cofactor. Requires Mn(2+) as cofactor. Post-translationally, palmitoylated; undergoes autopalmitoylation. In terms of processing, acetylated by EP300/p300; acetylation is stimulated by increased glutamine levels and promotes ubiquitin-mediated proteasomal degradation. Ubiquitinated by ZNRF1. Ubiquitinated by the DCX (DDB1-CUL4-X-box) E3 ubiquitin-protein ligase complex called CRL4(CRBN), leading to proteasomal degradation. In terms of tissue distribution, in the adult liver, expression is restricted to a small population of hepatocytes which form only a small rim of one to three hepatocytes around the central veins. Expressed in lung microvascular endothelial cells.

It localises to the cytoplasm. Its subcellular location is the cytosol. The protein resides in the microsome. It is found in the mitochondrion. The protein localises to the cell membrane. It catalyses the reaction L-glutamate + NH4(+) + ATP = L-glutamine + ADP + phosphate + H(+). It carries out the reaction L-cysteinyl-[protein] + hexadecanoyl-CoA = S-hexadecanoyl-L-cysteinyl-[protein] + CoA. Glutamine synthetase activity is inhibited by methionine sulfoximine (MSO). Glutamine synthetase that catalyzes the ATP-dependent conversion of glutamate and ammonia to glutamine. Its role depends on tissue localization: in the brain, it regulates the levels of toxic ammonia and converts neurotoxic glutamate to harmless glutamine, whereas in the liver, it is one of the enzymes responsible for the removal of ammonia. Plays a key role in ammonium detoxification during erythropoiesis: the glutamine synthetase activity is required to remove ammonium generated by porphobilinogen deaminase (HMBS) during heme biosynthesis to prevent ammonium accumulation and oxidative stress. Essential for proliferation of fetal skin fibroblasts. Independently of its glutamine synthetase activity, required for endothelial cell migration during vascular development. Involved in angiogenesis by regulating membrane localization and activation of the GTPase RHOJ, possibly by promoting RHOJ palmitoylation. May act as a palmitoyltransferase for RHOJ: able to autopalmitoylate and then transfer the palmitoyl group to RHOJ. Plays a role in ribosomal 40S subunit biogenesis. Through the interaction with BEST2, inhibits BEST2 channel activity by affecting the gating at the aperture in the absence of intracellular L-glutamate, but sensitizes BEST2 to intracellular L-glutamate, which promotes the opening of BEST2 and thus relieves its inhibitory effect on BEST2. The polypeptide is Glutamine synthetase (Rattus norvegicus (Rat)).